We begin with the raw amino-acid sequence, 151 residues long: Ubiquitin-conjugating enzyme E2 2 (151 aa).

The UBC core domain occupies 4-150 (AARRRLMRDF…VRETVEKSWE (147 aa)). Catalysis depends on Cys88, which acts as the Glycyl thioester intermediate.

Belongs to the ubiquitin-conjugating enzyme family.

It localises to the cytoplasm. The protein localises to the nucleus. The enzyme catalyses S-ubiquitinyl-[E1 ubiquitin-activating enzyme]-L-cysteine + [E2 ubiquitin-conjugating enzyme]-L-cysteine = [E1 ubiquitin-activating enzyme]-L-cysteine + S-ubiquitinyl-[E2 ubiquitin-conjugating enzyme]-L-cysteine.. Its pathway is protein modification; protein ubiquitination. Catalyzes the covalent attachment of ubiquitin to other proteins. Plays a role in transcription regulation by catalyzing the monoubiquitination of histone H2B to form H2BK123ub1. H2BK123ub1 gives a specific tag for epigenetic transcriptional activation and is also a prerequisite for H3K4me and H3K79me formation. Also involved in postreplication repair of UV-damaged DNA, in N-end rule-dependent protein degradation and in sporulation. This chain is Ubiquitin-conjugating enzyme E2 2 (UBC2), found in Fusarium solani (Filamentous fungus).